Here is a 312-residue protein sequence, read N- to C-terminus: Aspartate carbamoyltransferase catalytic subunit (312 aa).

Arginine 58 and threonine 59 together coordinate carbamoyl phosphate. Lysine 86 provides a ligand contact to L-aspartate. Residues arginine 108, histidine 136, and glutamine 139 each contribute to the carbamoyl phosphate site. Residues arginine 169 and arginine 223 each coordinate L-aspartate. Residues glycine 264 and proline 265 each contribute to the carbamoyl phosphate site.

The protein belongs to the aspartate/ornithine carbamoyltransferase superfamily. ATCase family. As to quaternary structure, heterododecamer (2C3:3R2) of six catalytic PyrB chains organized as two trimers (C3), and six regulatory PyrI chains organized as three dimers (R2).

It catalyses the reaction carbamoyl phosphate + L-aspartate = N-carbamoyl-L-aspartate + phosphate + H(+). It participates in pyrimidine metabolism; UMP biosynthesis via de novo pathway; (S)-dihydroorotate from bicarbonate: step 2/3. Functionally, catalyzes the condensation of carbamoyl phosphate and aspartate to form carbamoyl aspartate and inorganic phosphate, the committed step in the de novo pyrimidine nucleotide biosynthesis pathway. The polypeptide is Aspartate carbamoyltransferase catalytic subunit (Desulforamulus reducens (strain ATCC BAA-1160 / DSM 100696 / MI-1) (Desulfotomaculum reducens)).